We begin with the raw amino-acid sequence, 276 residues long: Shikimate dehydrogenase (NADP(+)) (276 aa).

Shikimate contacts are provided by residues 18-20 and Thr65; that span reads SRS. The active-site Proton acceptor is Lys69. Shikimate contacts are provided by Asn90 and Asp106. Residues 132–136 and Ile221 each bind NADP(+); that span reads GAGGA. Tyr223 provides a ligand contact to shikimate. NADP(+) is bound at residue Gly244.

Belongs to the shikimate dehydrogenase family. Homodimer.

It catalyses the reaction shikimate + NADP(+) = 3-dehydroshikimate + NADPH + H(+). It participates in metabolic intermediate biosynthesis; chorismate biosynthesis; chorismate from D-erythrose 4-phosphate and phosphoenolpyruvate: step 4/7. In terms of biological role, involved in the biosynthesis of the chorismate, which leads to the biosynthesis of aromatic amino acids. Catalyzes the reversible NADPH linked reduction of 3-dehydroshikimate (DHSA) to yield shikimate (SA). The sequence is that of Shikimate dehydrogenase (NADP(+)) from Paramagnetospirillum magneticum (strain ATCC 700264 / AMB-1) (Magnetospirillum magneticum).